The following is a 234-amino-acid chain: Leucyl/phenylalanyl-tRNA--protein transferase (234 aa).

It belongs to the L/F-transferase family.

The protein localises to the cytoplasm. The enzyme catalyses N-terminal L-lysyl-[protein] + L-leucyl-tRNA(Leu) = N-terminal L-leucyl-L-lysyl-[protein] + tRNA(Leu) + H(+). The catalysed reaction is N-terminal L-arginyl-[protein] + L-leucyl-tRNA(Leu) = N-terminal L-leucyl-L-arginyl-[protein] + tRNA(Leu) + H(+). It carries out the reaction L-phenylalanyl-tRNA(Phe) + an N-terminal L-alpha-aminoacyl-[protein] = an N-terminal L-phenylalanyl-L-alpha-aminoacyl-[protein] + tRNA(Phe). Functions in the N-end rule pathway of protein degradation where it conjugates Leu, Phe and, less efficiently, Met from aminoacyl-tRNAs to the N-termini of proteins containing an N-terminal arginine or lysine. The protein is Leucyl/phenylalanyl-tRNA--protein transferase of Salmonella paratyphi A (strain ATCC 9150 / SARB42).